Here is a 318-residue protein sequence, read N- to C-terminus: RPPVTEVESQNYYHFHDNRVLPSHVDEALANSEGWWYKPDFIINDLNVQSAIGYPAHEEVVPLVAGTYAVRGYARGHGNKIIRCEVSLDDGKSWRLGSVTHEGQPTEYGKHWGWVWWSLEVPIAELLTTPEIICRAWDSSMNTQPNTFTWNVMGMMNNCCYRVKIHPRQTTDGRFALQFEHPTIAGPTVGGWMNRAEDVAAAAAVTVAPPPAPAGAKSFTMAEVETHTTMESAWFVVDGKVYDATPFLKDHPGGADSILLVAGIDATDEFNAIHSLKAKKQLLEYYIGELAEEGQEAAASDRATPGPAAAIGTAVPVA.

Residues 216-291 (AKSFTMAEVE…LLEYYIGELA (76 aa)) enclose the Cytochrome b5 heme-binding domain. Heme contacts are provided by H251 and H274.

It belongs to the nitrate reductase family. Homodimer. FAD serves as cofactor. It depends on heme as a cofactor. Mo-molybdopterin is required as a cofactor.

It catalyses the reaction nitrite + NAD(+) + H2O = nitrate + NADH + H(+). In terms of biological role, nitrate reductase is a key enzyme involved in the first step of nitrate assimilation in plants, fungi and bacteria. This chain is Nitrate reductase [NADH], found in Chlorella vulgaris (Green alga).